A 328-amino-acid polypeptide reads, in one-letter code: Malate dehydrogenase (328 aa).

12-18 (GAAGQIA) provides a ligand contact to NAD(+). Substrate-binding residues include R93 and R99. Residues N106, Q113, and 130–132 (VGN) contribute to the NAD(+) site. Positions 132 and 163 each coordinate substrate. H188 functions as the Proton acceptor in the catalytic mechanism.

This sequence belongs to the LDH/MDH superfamily. MDH type 2 family.

It carries out the reaction (S)-malate + NAD(+) = oxaloacetate + NADH + H(+). Its function is as follows. Catalyzes the reversible oxidation of malate to oxaloacetate. The chain is Malate dehydrogenase from Burkholderia multivorans (strain ATCC 17616 / 249).